The chain runs to 375 residues: Protein arginine N-methyltransferase 6 (375 aa).

Positions 1 to 38 (MSQPKKRKLESGGGGEGGEGTEEEDGAEREAALERPRR) are disordered. T21 bears the Phosphothreonine mark. Over residues 28–38 (EREAALERPRR) the composition is skewed to basic and acidic residues. R29, R35, and R37 each carry asymmetric dimethylarginine; by autocatalysis. One can recognise an SAM-dependent MTase PRMT-type domain in the interval 44 to 374 (DQLYYECYSD…EEKTKDFAME (331 aa)). S-adenosyl-L-methionine contacts are provided by H57, R66, G90, E112, and E141. Catalysis depends on residues E155 and E164.

It belongs to the class I-like SAM-binding methyltransferase superfamily. Protein arginine N-methyltransferase family. PRMT6 subfamily. As to quaternary structure, interacts with EPB41L3 and NCOA1. In terms of assembly, (Microbial infection) Interacts with (and methylates) HIV-1 Tat, Rev and Nucleocapsid protein p7 (NC). (Microbial infection) Interacts with human cytomegalovirus protein UL69. Automethylation enhances its stability and antiretroviral activity. As to expression, highly expressed in kidney and testis.

Its subcellular location is the nucleus. It carries out the reaction L-arginyl-[protein] + 2 S-adenosyl-L-methionine = N(omega),N(omega)-dimethyl-L-arginyl-[protein] + 2 S-adenosyl-L-homocysteine + 2 H(+). Its function is as follows. Arginine methyltransferase that can catalyze the formation of both omega-N monomethylarginine (MMA) and asymmetrical dimethylarginine (aDMA), with a strong preference for the formation of aDMA. Preferentially methylates arginyl residues present in a glycine and arginine-rich domain and displays preference for monomethylated substrates. Specifically mediates the asymmetric dimethylation of histone H3 'Arg-2' to form H3R2me2a. H3R2me2a represents a specific tag for epigenetic transcriptional repression and is mutually exclusive with methylation on histone H3 'Lys-4' (H3K4me2 and H3K4me3). Acts as a transcriptional repressor of various genes such as HOXA2, THBS1 and TP53. Repression of TP53 blocks cellular senescence. Also methylates histone H2A and H4 'Arg-3' (H2AR3me and H4R3me, respectively). Acts as a regulator of DNA base excision during DNA repair by mediating the methylation of DNA polymerase beta (POLB), leading to the stimulation of its polymerase activity by enhancing DNA binding and processivity. Methylates HMGA1. Regulates alternative splicing events. Acts as a transcriptional coactivator of a number of steroid hormone receptors including ESR1, ESR2, PGR and NR3C1. Promotes fasting-induced transcriptional activation of the gluconeogenic program through methylation of the CRTC2 transcription coactivator. May play a role in innate immunity against HIV-1 in case of infection by methylating and impairing the function of various HIV-1 proteins such as Tat, Rev and Nucleocapsid protein p7 (NC). Methylates GPS2, protecting GPS2 from ubiquitination and degradation. Methylates SIRT7, inhibiting SIRT7 histone deacetylase activity and promoting mitochondria biogenesis. The polypeptide is Protein arginine N-methyltransferase 6 (PRMT6) (Homo sapiens (Human)).